The primary structure comprises 287 residues: O-ureido-serine racemase (287 aa).

Asn20 provides a ligand contact to substrate. The active-site Proton donor is Cys81. Residues 82-83, Asn167, Asn200, and 218-219 each bind substrate; these read GN and EY. The Proton acceptor role is filled by Cys227. 228 to 229 lines the substrate pocket; sequence GS.

The protein belongs to the diaminopimelate epimerase family. In terms of assembly, monomer.

It localises to the cytoplasm. The enzyme catalyses O-ureido-L-serine = O-ureido-D-serine. Its activity is regulated as follows. Inhibited by thiol-inactivating reagents such as iodoacetamide and Hg(2+) ions. Its function is as follows. Involved in the biosynthesis of the antibiotic D-cycloserine (DCS), a cyclic structural analog of D-alanine, used as an antitubercular agent. Catalyzes the stereoinversion of O-ureido-L-serine to O-ureido-D-serine. This chain is O-ureido-serine racemase, found in Streptomyces lavendulae.